A 319-amino-acid polypeptide reads, in one-letter code: Acetyl-coenzyme A carboxylase carboxyl transferase subunit beta, chloroplastic (319 aa).

Positions 47–319 constitute a CoA carboxyltransferase N-terminal domain; sequence LWVQCDNCES…ELFYVLQSSS (273 aa). Zn(2+)-binding residues include Cys51, Cys54, Cys70, and Cys73. Residues 51–73 form a C4-type zinc finger; the sequence is CDNCESLLYIRFLRENKSVCEEC.

This sequence belongs to the AccD/PCCB family. In terms of assembly, acetyl-CoA carboxylase is a heterohexamer composed of biotin carboxyl carrier protein, biotin carboxylase and 2 subunits each of ACCase subunit alpha and ACCase plastid-coded subunit beta (accD). Zn(2+) is required as a cofactor.

It is found in the plastid. It localises to the chloroplast stroma. It catalyses the reaction N(6)-carboxybiotinyl-L-lysyl-[protein] + acetyl-CoA = N(6)-biotinyl-L-lysyl-[protein] + malonyl-CoA. Its pathway is lipid metabolism; malonyl-CoA biosynthesis; malonyl-CoA from acetyl-CoA: step 1/1. Functionally, component of the acetyl coenzyme A carboxylase (ACC) complex. Biotin carboxylase (BC) catalyzes the carboxylation of biotin on its carrier protein (BCCP) and then the CO(2) group is transferred by the transcarboxylase to acetyl-CoA to form malonyl-CoA. The polypeptide is Acetyl-coenzyme A carboxylase carboxyl transferase subunit beta, chloroplastic (Picea abies (Norway spruce)).